The sequence spans 185 residues: Putative manganese efflux pump MntP (185 aa).

6 consecutive transmembrane segments (helical) span residues 4 to 24 (LLLS…SVSL), 43 to 63 (IFFG…GVPI), 67 to 87 (IDPF…GKMI), 107 to 127 (LLLA…FALI), 131 to 151 (VLLP…FGVL), and 165 to 185 (QILG…EYCL).

Belongs to the MntP (TC 9.B.29) family.

Its subcellular location is the cell membrane. In terms of biological role, probably functions as a manganese efflux pump. The sequence is that of Putative manganese efflux pump MntP from Methanocorpusculum labreanum (strain ATCC 43576 / DSM 4855 / Z).